Here is a 376-residue protein sequence, read N- to C-terminus: cAMP-dependent protein kinase type I regulatory subunit (376 aa).

Residues 1-131 are dimerization and phosphorylation; the sequence is MSYMMAKTLE…ALSKAIAKNV (131 aa). The disordered stretch occupies residues 72–93; it reads PDDCEDLSPMPQTAAPPVRRRG. The Pseudophosphorylation motif motif lies at 91 to 95; that stretch reads RRGGI. Residue S96 is modified to Phosphoserine. 3',5'-cyclic AMP-binding positions include 132-247, E197, R206, 250-371, E321, and R330; these read LFAH…FLSR and ILES…YNSF.

Belongs to the cAMP-dependent kinase regulatory chain family. Tetramer, composed of 2 regulatory (R) and 2 catalytic (C) subunits. In the presence of cAMP it dissociates into 2 active monomeric C subunits and an R dimer. Post-translationally, the pseudophosphorylation site binds to the substrate-binding region of the catalytic chain but is not phosphorylated. The physiological significance of phosphorylations by other kinases is unclear.

The polypeptide is cAMP-dependent protein kinase type I regulatory subunit (Pka-R1) (Drosophila melanogaster (Fruit fly)).